Reading from the N-terminus, the 606-residue chain is Radial spoke head protein 3 homolog (606 aa).

The interval 1-103 (MARSEARRQA…NSPEAPPLDG (103 aa)) is disordered. Basic and acidic residues predominate over residues 15–46 (PRAVPEERALRERRQPRPRREPLESGAGDHRR). T331 carries the phosphothreonine; by MAPK1 modification. Residues 393–429 (AYEELRNIELAEVQRLEEQERRHREEKERRKQQQWQV) are a coiled coil. Positions 520 to 606 (EGRHASVRPE…KSSKREELSQ (87 aa)) are disordered. Positions 547–556 (SQDQGASQAQ) are enriched in polar residues. Residues 572 to 604 (ARYAERVSSQERRLAEENDELTEMRKSSKREEL) are a coiled coil. Residues 573 to 606 (RYAERVSSQERRLAEENDELTEMRKSSKREELSQ) show a composition bias toward basic and acidic residues.

The protein belongs to the flagellar radial spoke RSP3 family. Component of the axonemal radial spoke 1 (RS1) and 2 (RS2) complexes, at least composed of spoke head proteins RSPH1, RSPH3, RSPH9 and the cilia-specific component RSPH4A or sperm-specific component RSPH6A, spoke stalk proteins RSPH14, DNAJB13, DYDC1, ROPN1L and NME5, and the RS1 complex-specific anchor protein IQUB. Interacts with IQUB. Interacts with phosphorylated MAPK1. Interacts with MEK1. Interacts with PKA regulatory subunits PRKAR1A and PRKAR1B. Interacts with RSPH1. Interacts with RSPH4A. Interacts with RSPH6A. Interacts with RSPH9. Interacts with LRRC23.

Its subcellular location is the cytoplasm. It localises to the cytoskeleton. The protein resides in the cilium axoneme. It is found in the flagellum axoneme. Functionally, functions as part of axonemal radial spoke complexes that play an important part in the motility of sperm and cilia. Functions as a protein kinase A-anchoring protein that scaffolds the cAMP-dependent protein kinase holoenzyme. May serve as a point of convergence for MAPK and PKA signaling in cilia. This chain is Radial spoke head protein 3 homolog (RSPH3), found in Bos taurus (Bovine).